The chain runs to 64 residues: Large ribosomal subunit protein bL35 (64 aa).

Belongs to the bacterial ribosomal protein bL35 family.

The polypeptide is Large ribosomal subunit protein bL35 (Levilactobacillus brevis (strain ATCC 367 / BCRC 12310 / CIP 105137 / JCM 1170 / LMG 11437 / NCIMB 947 / NCTC 947) (Lactobacillus brevis)).